The following is a 274-amino-acid chain: Large ribosomal subunit protein uL2 (274 aa).

The disordered stretch occupies residues 223–274; that stretch reads VAMNPVDHPHGGGEGKTSGGRHPVSPWGVPTKGYKTRSNKRTDKFIVRRRAK.

It belongs to the universal ribosomal protein uL2 family. Part of the 50S ribosomal subunit. Forms a bridge to the 30S subunit in the 70S ribosome.

One of the primary rRNA binding proteins. Required for association of the 30S and 50S subunits to form the 70S ribosome, for tRNA binding and peptide bond formation. It has been suggested to have peptidyltransferase activity; this is somewhat controversial. Makes several contacts with the 16S rRNA in the 70S ribosome. The polypeptide is Large ribosomal subunit protein uL2 (Colwellia psychrerythraea (strain 34H / ATCC BAA-681) (Vibrio psychroerythus)).